The following is a 149-amino-acid chain: SsrA-binding protein (149 aa).

Residues glycine 121–histidine 149 form a disordered region. The span at lysine 127–arginine 142 shows a compositional bias: basic and acidic residues.

This sequence belongs to the SmpB family.

The protein localises to the cytoplasm. Functionally, required for rescue of stalled ribosomes mediated by trans-translation. Binds to transfer-messenger RNA (tmRNA), required for stable association of tmRNA with ribosomes. tmRNA and SmpB together mimic tRNA shape, replacing the anticodon stem-loop with SmpB. tmRNA is encoded by the ssrA gene; the 2 termini fold to resemble tRNA(Ala) and it encodes a 'tag peptide', a short internal open reading frame. During trans-translation Ala-aminoacylated tmRNA acts like a tRNA, entering the A-site of stalled ribosomes, displacing the stalled mRNA. The ribosome then switches to translate the ORF on the tmRNA; the nascent peptide is terminated with the 'tag peptide' encoded by the tmRNA and targeted for degradation. The ribosome is freed to recommence translation, which seems to be the essential function of trans-translation. The polypeptide is SsrA-binding protein (Thiobacillus denitrificans (strain ATCC 25259 / T1)).